We begin with the raw amino-acid sequence, 356 residues long: tRNA N6-adenosine threonylcarbamoyltransferase (356 aa).

Positions 116 and 120 each coordinate Fe cation. Residues 139–143, Asp-174, Gly-187, Asp-191, and Asn-281 each bind substrate; that span reads IVSGG. Asp-309 lines the Fe cation pocket.

The protein belongs to the KAE1 / TsaD family. The cofactor is Fe(2+).

The protein localises to the cytoplasm. The enzyme catalyses L-threonylcarbamoyladenylate + adenosine(37) in tRNA = N(6)-L-threonylcarbamoyladenosine(37) in tRNA + AMP + H(+). Required for the formation of a threonylcarbamoyl group on adenosine at position 37 (t(6)A37) in tRNAs that read codons beginning with adenine. Is involved in the transfer of the threonylcarbamoyl moiety of threonylcarbamoyl-AMP (TC-AMP) to the N6 group of A37, together with TsaE and TsaB. TsaD likely plays a direct catalytic role in this reaction. The sequence is that of tRNA N6-adenosine threonylcarbamoyltransferase from Frankia casuarinae (strain DSM 45818 / CECT 9043 / HFP020203 / CcI3).